A 145-amino-acid chain; its full sequence is Probable DNA-directed RNA polymerases I and III subunit RPAC2 (145 aa).

The segment at 1–52 (MGKKSEKKVVEETMEVDEQPAVEPEAVPEEEPEVEDEDLNVPKKKKMEILDP) is disordered. Acidic residues predominate over residues 12 to 39 (ETMEVDEQPAVEPEAVPEEEPEVEDEDL).

This sequence belongs to the archaeal Rpo11/eukaryotic RPB11/RPC19 RNA polymerase subunit family. As to quaternary structure, component of the RNA polymerase I (Pol I) and RNA polymerase III (Pol III) complexes consisting of at least 13 and 17 subunits, respectively.

It localises to the nucleus. In terms of biological role, DNA-dependent RNA polymerase catalyzes the transcription of DNA into RNA using the four ribonucleoside triphosphates as substrates. Common core component of RNA polymerases I and III which synthesize ribosomal RNA precursors and small RNAs, such as 5S rRNA and tRNAs, respectively. This Caenorhabditis briggsae protein is Probable DNA-directed RNA polymerases I and III subunit RPAC2 (rpac-19).